Consider the following 189-residue polypeptide: UPF0149 protein VF_2102 (189 aa).

The protein belongs to the UPF0149 family.

This is UPF0149 protein VF_2102 from Aliivibrio fischeri (strain ATCC 700601 / ES114) (Vibrio fischeri).